Consider the following 440-residue polypeptide: Chromosome partition protein MukF (440 aa).

The leucine-zipper stretch occupies residues Leu208–Ile236.

It belongs to the MukF family. Interacts, and probably forms a ternary complex, with MukE and MukB via its C-terminal region. The complex formation is stimulated by calcium or magnesium. It is required for an interaction between MukE and MukB.

The protein resides in the cytoplasm. It localises to the nucleoid. Involved in chromosome condensation, segregation and cell cycle progression. May participate in facilitating chromosome segregation by condensation DNA from both sides of a centrally located replisome during cell division. Not required for mini-F plasmid partitioning. Probably acts via its interaction with MukB and MukE. Overexpression results in anucleate cells. It has a calcium binding activity. The protein is Chromosome partition protein MukF of Salmonella gallinarum (strain 287/91 / NCTC 13346).